Consider the following 303-residue polypeptide: N-acetyl-D-glucosamine kinase (303 aa).

ATP is bound by residues 4–11 (GFDIGGTK) and 133–140 (GVGGGLIF). Zn(2+) contacts are provided by histidine 157, cysteine 177, cysteine 179, and cysteine 184.

Belongs to the ROK (NagC/XylR) family. NagK subfamily.

The catalysed reaction is N-acetyl-D-glucosamine + ATP = N-acetyl-D-glucosamine 6-phosphate + ADP + H(+). Its pathway is cell wall biogenesis; peptidoglycan recycling. In terms of biological role, catalyzes the phosphorylation of N-acetyl-D-glucosamine (GlcNAc) derived from cell-wall degradation, yielding GlcNAc-6-P. The chain is N-acetyl-D-glucosamine kinase from Escherichia coli O6:H1 (strain CFT073 / ATCC 700928 / UPEC).